The primary structure comprises 347 residues: Suppressor of RNA-mediated gene silencing (347 aa).

This sequence belongs to the phytoreovirus non-structural protein 10 family.

Suppressor of RNA-mediated gene silencing, also known as post-transcriptional gene silencing (PTGS), a mechanism of plant viral defense that limits the accumulation of viral RNAs. The polypeptide is Suppressor of RNA-mediated gene silencing (Catharanthus roseus (Madagascar periwinkle)).